The primary structure comprises 1033 residues: PDZ domain-containing protein 7 (1033 aa).

PDZ domains follow at residues serine 86 to arginine 168 and isoleucine 210 to arginine 293. Positions glutamate 323–serine 344 are enriched in low complexity. Disordered regions lie at residues glutamate 323–valine 380, lysine 444–serine 464, glutamate 754–threonine 864, and methionine 943–proline 1033. The span at alanine 770–serine 784 shows a compositional bias: basic residues. Low complexity predominate over residues serine 785–proline 797. One can recognise a PDZ 3 domain in the interval threonine 862–alanine 934. The span at proline 991–proline 1000 shows a compositional bias: pro residues.

As to quaternary structure, homodimerizes (via PDZ2 domain). Component of USH2 complex, composed of ADGRV1, PDZD7, USH2A and WHRN. Interacts (via PDZ domains) with WHRN; the interaction is direct. Interacts with USH1G. Interacts with ADGRV1 (via the cytoplasmic region). Interacts with USH2A (via the cytoplasmic region). Interacts with MYO7A (via MyTH4-FERM domains). In terms of tissue distribution, weakly expressed in the inner ear. Expressed in the retinal pigment epithelium.

The protein resides in the cell projection. The protein localises to the cilium. It is found in the nucleus. Its subcellular location is the stereocilium. In cochlear developing hair cells, essential in organizing the USH2 complex at stereocilia ankle links. Blocks inhibition of adenylate cyclase activity mediated by ADGRV1. The chain is PDZ domain-containing protein 7 from Homo sapiens (Human).